We begin with the raw amino-acid sequence, 583 residues long: Potassium-transporting ATPase potassium-binding subunit (583 aa).

The next 10 membrane-spanning stretches (helical) occupy residues 3–23, 66–86, 135–155, 177–197, 266–286, 293–313, 402–422, 440–460, 506–526, and 549–569; these read NIIW…WPLG, MACV…LLMA, GLTV…FALI, VLYI…EQGV, LEML…GAKI, VAIF…TVQA, GLYG…LMVG, AVVV…LMCL, VLLG…ILAM, and LFIF…FFPA.

The protein belongs to the KdpA family. As to quaternary structure, the system is composed of three essential subunits: KdpA, KdpB and KdpC.

Its subcellular location is the cell inner membrane. In terms of biological role, part of the high-affinity ATP-driven potassium transport (or Kdp) system, which catalyzes the hydrolysis of ATP coupled with the electrogenic transport of potassium into the cytoplasm. This subunit binds the periplasmic potassium ions and delivers the ions to the membrane domain of KdpB through an intramembrane tunnel. In Desulfovibrio desulfuricans (strain ATCC 27774 / DSM 6949 / MB), this protein is Potassium-transporting ATPase potassium-binding subunit.